The chain runs to 82 residues: Musculoskeletal embryonic nuclear protein 1 (82 aa).

Disordered regions lie at residues 1–33 (MSQAGAQEAPIKKKRPPVKDEDLKGARGNLTKN) and 49–82 (QAGSAAPSVFSRTRTGTETVFEKPKAGPTKSVFG). Ser-2 carries the post-translational modification Phosphoserine. Positions 10–18 (PIKKKRPPV) match the Nuclear localization signal motif.

Belongs to the MUSTN1 family. As to expression, expression in skeletal muscle is reduced during limb unloading but increases during the active recovery phase that follows.

It is found in the nucleus. The protein resides in the cytoplasm. It localises to the secreted. Its subcellular location is the extracellular space. Its function is as follows. Required for chondrocyte development and proliferation. Plays a role in myoblast differentiation and fusion. Modulates skeletal muscle extracellular matrix composition. Plays a role in skeletal muscle function. Plays a role in glucose homeostasis. The chain is Musculoskeletal embryonic nuclear protein 1 (MUSTN1) from Homo sapiens (Human).